The chain runs to 343 residues: Glycerol-3-phosphate dehydrogenase [NAD(P)+] (343 aa).

NADPH contacts are provided by Trp-29, Arg-49, and Lys-122. The sn-glycerol 3-phosphate site is built by Lys-122, Gly-150, and Ser-152. NADPH is bound at residue Ala-154. Sn-glycerol 3-phosphate contacts are provided by Lys-205, Asp-258, Ser-268, Arg-269, and Asn-270. Catalysis depends on Lys-205, which acts as the Proton acceptor. An NADPH-binding site is contributed by Arg-269. Residues Leu-288 and Glu-290 each coordinate NADPH.

This sequence belongs to the NAD-dependent glycerol-3-phosphate dehydrogenase family.

The protein resides in the cytoplasm. The catalysed reaction is sn-glycerol 3-phosphate + NAD(+) = dihydroxyacetone phosphate + NADH + H(+). The enzyme catalyses sn-glycerol 3-phosphate + NADP(+) = dihydroxyacetone phosphate + NADPH + H(+). Its pathway is membrane lipid metabolism; glycerophospholipid metabolism. Functionally, catalyzes the reduction of the glycolytic intermediate dihydroxyacetone phosphate (DHAP) to sn-glycerol 3-phosphate (G3P), the key precursor for phospholipid synthesis. The sequence is that of Glycerol-3-phosphate dehydrogenase [NAD(P)+] from Mesorhizobium japonicum (strain LMG 29417 / CECT 9101 / MAFF 303099) (Mesorhizobium loti (strain MAFF 303099)).